The sequence spans 590 residues: Keratin, type II cytoskeletal 5 (590 aa).

Low complexity predominate over residues 1-18 (MSRQSSVSFRSGGSRSFS). The segment at 1–20 (MSRQSSVSFRSGGSRSFSTA) is disordered. A head region spans residues 1 to 167 (MSRQSSVSFR…DPSIQRVRTE (167 aa)). Phosphoserine occurs at positions 5, 8, 16, and 21. A Phosphothreonine; by CDK1 modification is found at Thr-24. Residues Ser-26, Ser-36, Ser-50, Ser-64, Ser-71, Ser-75, and Ser-82 each carry the phosphoserine modification. A Phosphothreonine; by CDK1 modification is found at Thr-151. Residues 168–203 (EREQIKTLNNKFASFIDKVRFLEQQNKVLDTKWTLL) are coil 1A. Positions 168-481 (EREQIKTLNN…KLLEGEECRL (314 aa)) constitute an IF rod domain. The tract at residues 204-222 (QEQGTKTVRQNLEPLFEQY) is linker 1. Residues 223–315 (INNLRRQLDS…FFDAELSQMQ (93 aa)) form a coil 1B region. A linker 12 region spans residues 316 to 338 (THVSDTSVVLSMDNNRNLDLDSI). Residues 339–477 (IAEVKAQYEE…ATYRKLLEGE (139 aa)) are coil 2. The segment at 478–590 (ECRLSGEGVG…TSSSRKSFKS (113 aa)) is tail. The interval 566 to 590 (GSGGGSSSSVKFVSTTSSSRKSFKS) is disordered. Residues 572-590 (SSSVKFVSTTSSSRKSFKS) are compositionally biased toward low complexity.

This sequence belongs to the intermediate filament family. In terms of assembly, heterodimer of a type I and a type II keratin. Heterodimer with type I keratin KRT25 leading to the formation of keratin intermediate filament (KIF) network. Forms a heterodimer (via 2B domains) with KRT14 (via 2B domains). Interacts with PLEC isoform 1C, when in a heterodimer with KRT14. Interacts with TCHP. Interacts with EPPK1. Interacts with AMELX. Interacts with PKP1 (via N-terminus) and PKP2. Phosphorylated by CDK1, AURKB and Rho-kinase, phosphorylation is regulated by the cell cycle. Thr-24 phosphorylation, mediated by CDK1, peaks during prometaphase or metaphase cells with phosphorylated filamentous structures evident throughout the cytoplasm during early mitosis. CDK1 phosphorylates Thr-24 in mitotic cells at the site of injury. In terms of processing, O-glycosylated. Expressed in corneal epithelium (at protein level). Expressed in keratinocytes (at protein level).

It localises to the cytoplasm. Functionally, required for the formation of keratin intermediate filaments in the basal epidermis and maintenance of the skin barrier in response to mechanical stress. Regulates the recruitment of Langerhans cells to the epidermis, potentially by modulation of the abundance of macrophage chemotactic cytokines, macrophage inflammatory cytokines and CTNND1 localization in keratinocytes. This is Keratin, type II cytoskeletal 5 (KRT5) from Homo sapiens (Human).